A 189-amino-acid chain; its full sequence is Crossover junction endodeoxyribonuclease RuvC (189 aa).

Residues D9, E70, and D143 contribute to the active site. Residues D9, E70, and D143 each coordinate Mg(2+). The span at 162–178 (MGAASGNSSLTPAQKAW) shows a compositional bias: low complexity. Residues 162-189 (MGAASGNSSLTPAQKAWADAEAKARRKR) are disordered. Positions 179–189 (ADAEAKARRKR) are enriched in basic and acidic residues.

It belongs to the RuvC family. Homodimer which binds Holliday junction (HJ) DNA. The HJ becomes 2-fold symmetrical on binding to RuvC with unstacked arms; it has a different conformation from HJ DNA in complex with RuvA. In the full resolvosome a probable DNA-RuvA(4)-RuvB(12)-RuvC(2) complex forms which resolves the HJ. It depends on Mg(2+) as a cofactor.

It localises to the cytoplasm. The enzyme catalyses Endonucleolytic cleavage at a junction such as a reciprocal single-stranded crossover between two homologous DNA duplexes (Holliday junction).. Its function is as follows. The RuvA-RuvB-RuvC complex processes Holliday junction (HJ) DNA during genetic recombination and DNA repair. Endonuclease that resolves HJ intermediates. Cleaves cruciform DNA by making single-stranded nicks across the HJ at symmetrical positions within the homologous arms, yielding a 5'-phosphate and a 3'-hydroxyl group; requires a central core of homology in the junction. The consensus cleavage sequence is 5'-(A/T)TT(C/G)-3'. Cleavage occurs on the 3'-side of the TT dinucleotide at the point of strand exchange. HJ branch migration catalyzed by RuvA-RuvB allows RuvC to scan DNA until it finds its consensus sequence, where it cleaves and resolves the cruciform DNA. In Paenarthrobacter aurescens (strain TC1), this protein is Crossover junction endodeoxyribonuclease RuvC.